The primary structure comprises 322 residues: UDP-galactose transporter homolog 1 (322 aa).

5 helical membrane-spanning segments follow: residues 4–24 (FMRQ…SWAV), 43–63 (ALLS…WNWF), 76–96 (FLGY…FGYA), 105–125 (TVIL…VFVY), and 129–149 (FPPH…IFSY). A glycan (N-linked (GlcNAc...) asparagine) is linked at Asn152. 4 helical membrane passes run 164–184 (SPIG…TNTT), 199–219 (MMIA…ISPF), 250–270 (LFIF…ITLT), and 290–310 (IQWL…GLKI). Residues Asn313 and Asn314 are each glycosylated (N-linked (GlcNAc...) asparagine).

It belongs to the nucleotide-sugar transporter family. SLC35B subfamily.

It is found in the endoplasmic reticulum membrane. Its function is as follows. May be involved in specific transport of UDP-Gal from the cytosol to the Golgi lumen. Involved in the maintenance of optimal conditions for the folding of secretory pathway proteins in the endoplasmic reticulum. In Schizosaccharomyces pombe (strain 972 / ATCC 24843) (Fission yeast), this protein is UDP-galactose transporter homolog 1 (hut1).